Consider the following 296-residue polypeptide: SPbeta prophage-derived endonuclease YokF (296 aa).

Positions 1–19 are cleaved as a signal peptide; that stretch reads MKKVLLGFAAFTLSLSLAA. Cys-20 carries the N-palmitoyl cysteine lipid modification. Cys-20 carries S-diacylglycerol cysteine lipidation. The interval 20–65 is disordered; that stretch reads CSSNDSEKVSTEKETPQASTDVEKKTEQKESTKEKTADKSKEKDKK. The segment covering 24–65 has biased composition (basic and acidic residues); sequence DSEKVSTEKETPQASTDVEKKTEQKESTKEKTADKSKEKDKK. The TNase-like domain maps to 66-199; sequence ELVDVTLDRA…KSEKLSIWSK (134 aa). Residue Asp-79 coordinates Ca(2+). Arg-93 is an active-site residue. Residues Asp-98 and Thr-99 each coordinate Ca(2+). Residues Glu-101 and Arg-144 contribute to the active site. The disordered stretch occupies residues 218-296; sequence AVKKATTSKP…RDHDNYACER (79 aa). A compositionally biased stretch (low complexity) spans 219–244; the sequence is VKKATTSKPAATQPTTPKASSETSTT. The span at 284–296 shows a compositional bias: basic and acidic residues; sequence KMDRDHDNYACER.

Ca(2+) is required as a cofactor. Requires Cu(2+) as cofactor. The cofactor is Mn(2+).

Its subcellular location is the cell membrane. With respect to regulation, inhibited by aurintricalboxylic acid but not by Zn(2+), Mn(2+), Hg(2+), 2-mercaptoethanol and sodium citrate. Neither inhibited nor activated by ATP. Its function is as follows. Catalyzes the hydrolysis of supercoiled double and single strand DNA and RNA. Involved in chromosomal DNA degradation and cell death caused by thermal stress. This is SPbeta prophage-derived endonuclease YokF (yokF) from Bacillus subtilis (strain 168).